A 118-amino-acid polypeptide reads, in one-letter code: Protein MT2260 (118 aa).

This sequence belongs to the HesB/IscA family.

The protein is Protein MT2260 of Mycobacterium tuberculosis (strain CDC 1551 / Oshkosh).